The primary structure comprises 610 residues: Phosphoenolpyruvate carboxykinase [GTP] (610 aa).

Substrate is bound by residues arginine 82 and 221–223 (YGG). Mn(2+) is bound by residues lysine 230 and histidine 250. Residue serine 272 participates in substrate binding. 273 to 278 (ACGKTN) is a GTP binding site. Cysteine 274 is an active-site residue. Aspartate 297 lines the Mn(2+) pocket. Residue 387–389 (NSR) participates in substrate binding. Residues arginine 389, arginine 420, and 515–518 (FGDN) each bind GTP.

Belongs to the phosphoenolpyruvate carboxykinase [GTP] family. Monomer. Mn(2+) is required as a cofactor.

It localises to the cytoplasm. The enzyme catalyses oxaloacetate + GTP = phosphoenolpyruvate + GDP + CO2. Its pathway is carbohydrate biosynthesis; gluconeogenesis. Functionally, involved in the gluconeogenesis. Catalyzes the conversion of oxaloacetate (OAA) to phosphoenolpyruvate (PEP), the rate-limiting step in the metabolic pathway that produces glucose from lactate and other precursors derived from the citric acid cycle. This is Phosphoenolpyruvate carboxykinase [GTP] from Corynebacterium glutamicum (strain ATCC 13032 / DSM 20300 / JCM 1318 / BCRC 11384 / CCUG 27702 / LMG 3730 / NBRC 12168 / NCIMB 10025 / NRRL B-2784 / 534).